The chain runs to 442 residues: Amino-acid acetyltransferase (442 aa).

Positions 295 to 442 (EQARAATIED…RSKVLSKTIS (148 aa)) constitute an N-acetyltransferase domain.

It belongs to the acetyltransferase family. ArgA subfamily.

The protein localises to the cytoplasm. The enzyme catalyses L-glutamate + acetyl-CoA = N-acetyl-L-glutamate + CoA + H(+). The protein operates within amino-acid biosynthesis; L-arginine biosynthesis; N(2)-acetyl-L-ornithine from L-glutamate: step 1/4. This is Amino-acid acetyltransferase from Aeromonas salmonicida (strain A449).